We begin with the raw amino-acid sequence, 125 residues long: Phosphoribosyl-AMP cyclohydrolase (125 aa).

Mg(2+) is bound at residue Asp-74. Residue Cys-75 coordinates Zn(2+). Mg(2+) contacts are provided by Asp-76 and Asp-78. Zn(2+) is bound by residues Cys-92 and Cys-99.

Belongs to the PRA-CH family. As to quaternary structure, homodimer. Mg(2+) is required as a cofactor. Requires Zn(2+) as cofactor.

Its subcellular location is the cytoplasm. It catalyses the reaction 1-(5-phospho-beta-D-ribosyl)-5'-AMP + H2O = 1-(5-phospho-beta-D-ribosyl)-5-[(5-phospho-beta-D-ribosylamino)methylideneamino]imidazole-4-carboxamide. Its pathway is amino-acid biosynthesis; L-histidine biosynthesis; L-histidine from 5-phospho-alpha-D-ribose 1-diphosphate: step 3/9. Functionally, catalyzes the hydrolysis of the adenine ring of phosphoribosyl-AMP. The sequence is that of Phosphoribosyl-AMP cyclohydrolase from Syntrophotalea carbinolica (strain DSM 2380 / NBRC 103641 / GraBd1) (Pelobacter carbinolicus).